The primary structure comprises 272 residues: Cyclase-like protein 2 (272 aa).

An N-terminal signal peptide occupies residues 1–24 (MAVPPLFFLLTLLSLPSLLISAGA).

The protein belongs to the Cyclase 1 superfamily.

It is found in the secreted. Its subcellular location is the extracellular space. It localises to the extracellular matrix. May function redundantly with CYCLASE1 for normal plant growth, development and viability. The polypeptide is Cyclase-like protein 2 (Arabidopsis thaliana (Mouse-ear cress)).